A 702-amino-acid polypeptide reads, in one-letter code: MYGLIIDHIATYIKEKYGESTWSEVKFVSGVTDDTFQMDKKFSEGLSHKLIWACHDVTGDPVDELMTNIGTSFYKFLTKFEFNKVLRVLGRTFPQFLNGLDNLHEYLRFTFPKLKPPSFYCEHESRTGLTLHYRSKRRGFLHYVQGQIRNISQELFQTEVVIELLDIEHDLNLEHVIMRLHFNNLDFNRQGTAYRNLNDSILEKVKITSDIFFDIFPFIIVFNRGMRIRNIGIGLLRVMAGIVGKKINQTFLLMRPFIRFRWEEIMLHSNNIFELISSDPIQEDEDGILVYKTTDVDQMTEERHRMGDGEREKFLSLKGQMFYMEEWESICFVGIPVMSHLPQMYKSGLFINDFALHDSSRDLVLASTQQSAELKLLLHQEAQKSRNMRENMNRLKKERRRTDKLLYQMLPKSVANQLRHGESAVACCERFDSVTILFTDIVEFTKMCSSLTPLEVIEFLKVIYTNFDKIIDTHGVYKVETIGDAYMVVSGAPTKTEHDAEFILDCASQFLVEAGKMVNMNNKIHKIDIRAGVHSGSVVAGVVGLSMPRYCLFGETVYVANKMEQNSSPMKILVSETTHNKIEESDPGLYQFERREEIEIKDDQTIQTFFVVSRHGPHRVPSPRNCESRQDDSQTEDDDDDELLLPRKSGRKSPTSEAEEELKKKGQLSFTPVSDAGIECHSRNSNKTPRQSQDLTPRKSIT.

H104 is a binding site for heme. Residues 368 to 406 (TQQSAELKLLLHQEAQKSRNMRENMNRLKKERRRTDKLL) are a coiled coil. The Guanylate cyclase domain occupies 435–564 (TILFTDIVEF…ETVYVANKME (130 aa)). Mg(2+)-binding residues include D440 and D484. Residues 614–702 (RHGPHRVPSP…QDLTPRKSIT (89 aa)) are disordered. The span at 633–643 (SQTEDDDDDEL) shows a compositional bias: acidic residues. A compositionally biased stretch (polar residues) spans 683–695 (RNSNKTPRQSQDL).

This sequence belongs to the adenylyl cyclase class-4/guanylyl cyclase family. As to quaternary structure, heterodimer; with other soluble guanylate cyclases. Heme serves as cofactor. As to expression, expressed in a pair of bilaterally symmetric neurons in the head.

It is found in the cytoplasm. The catalysed reaction is GTP = 3',5'-cyclic GMP + diphosphate. May be regulated by molecular oxygen. Probably not activated by nitric oxide (NO). Synthesizes cyclic GMP (cGMP) from GTP. May play a role in embryogenesis. The sequence is that of Soluble guanylate cyclase gcy-31 (gcy-31) from Caenorhabditis elegans.